Consider the following 326-residue polypeptide: Vitamin B12 import system permease protein BtuC (326 aa).

Transmembrane regions (helical) follow at residues 19–39 (LSVL…LWIL), 61–81 (LAVL…QALF), 88–108 (PGLL…VLLG), 112–132 (LPNW…TLIL), 146–166 (LLAG…AIYF), 184–204 (GGVD…LLWI), 240–260 (GWMV…GLVI), 274–294 (VLLP…DIVA), and 302–322 (ELPI…WLLL).

Belongs to the binding-protein-dependent transport system permease family. FecCD subfamily. In terms of assembly, the complex is composed of two ATP-binding proteins (BtuD), two transmembrane proteins (BtuC) and a solute-binding protein (BtuF).

The protein resides in the cell inner membrane. In terms of biological role, part of the ABC transporter complex BtuCDF involved in vitamin B12 import. Involved in the translocation of the substrate across the membrane. This Escherichia coli O6:K15:H31 (strain 536 / UPEC) protein is Vitamin B12 import system permease protein BtuC.